We begin with the raw amino-acid sequence, 323 residues long: MRNAKLYSFSLPMEAGVVLRYQRLKTRDGFLVCLEQNGKQGWGEISPLPEFSHETLEQAQDAAQSWLAAWCLGENPTDSELPSVAFGISCALAELEGTLPEEANYRAAPLCNGDPDDLILSLNEMSGEKVAKVKVGLYEAVRDGIVVNLLLEAIPDLKLRLDANRSWTPAKAEGFAKYVNPQWRDRIAFLEEPCKTPEESLAFSQATGINIAWDETVRDEGFEVKAQEGVTAIVIKPTLVGSLARCQSIVEQAHALGLEAIISSSIESSFGLTQLARVAQWLTPDSIPGLDTVDLIKQQLIRCWPDVDIPLITLEQLKTVWQQ.

K134 serves as the catalytic Proton donor. Mg(2+) contacts are provided by D162, E191, and D214. K236 functions as the Proton acceptor in the catalytic mechanism.

Belongs to the mandelate racemase/muconate lactonizing enzyme family. MenC type 1 subfamily. Requires a divalent metal cation as cofactor.

It carries out the reaction (1R,6R)-6-hydroxy-2-succinyl-cyclohexa-2,4-diene-1-carboxylate = 2-succinylbenzoate + H2O. Its pathway is quinol/quinone metabolism; 1,4-dihydroxy-2-naphthoate biosynthesis; 1,4-dihydroxy-2-naphthoate from chorismate: step 4/7. It functions in the pathway quinol/quinone metabolism; menaquinone biosynthesis. Functionally, converts 2-succinyl-6-hydroxy-2,4-cyclohexadiene-1-carboxylate (SHCHC) to 2-succinylbenzoate (OSB). The polypeptide is o-succinylbenzoate synthase (Proteus mirabilis (strain HI4320)).